We begin with the raw amino-acid sequence, 211 residues long: Ribonuclease MRP protein subunit rmp1 (211 aa).

The chain crosses the membrane as a helical span at residues 73–93; the sequence is PALGLVLLGILARVWFVMGGI. A Phosphoserine modification is found at Ser156. The segment at 178-211 is disordered; the sequence is SQGTKRKSKNSNSTVKKKKKRARKGRDEIDDIFG. The segment covering 181–201 has biased composition (basic residues); it reads TKRKSKNSNSTVKKKKKRARK.

As to quaternary structure, component of RNase MRP complex which consists of an RNA moiety and at least 10 protein subunits.

The protein resides in the membrane. Its subcellular location is the nucleus. The protein localises to the nucleolus. Functions as part of ribonuclease MRP (RNase MRP), which is involved in rRNA processing in mitochondria. This chain is Ribonuclease MRP protein subunit rmp1, found in Schizosaccharomyces pombe (strain 972 / ATCC 24843) (Fission yeast).